Consider the following 258-residue polypeptide: MEKLIIAGREFNSRLFLGTGKFSSNEWMEQSILASGTEMVTVAMKRVDMESTEDDMLKHIVHPHIQLLPNTSGVRNAEEAVFAAQMAREAFGTNWLKLEIHPDPRYLLPDSVETLKATEELVKLGFVVLPYCQADPVLCKQLEEAGAATVMPLGAPIGTNKGLQTKEFLQIIIEQAGIPVVVDAGIGAPSHAAEAMEMGASACLVNTAIAVAGNPIEMAKAFKQAVEAGRTAYEAGLGMQAIGFVAEASSPLTAFLNE.

K97 acts as the Schiff-base intermediate with DXP in catalysis. Residues G158, 184–185 (AG), and 206–207 (NT) each bind 1-deoxy-D-xylulose 5-phosphate.

The protein belongs to the ThiG family. In terms of assembly, homotetramer. Forms heterodimers with either ThiH or ThiS.

Its subcellular location is the cytoplasm. It carries out the reaction [ThiS sulfur-carrier protein]-C-terminal-Gly-aminoethanethioate + 2-iminoacetate + 1-deoxy-D-xylulose 5-phosphate = [ThiS sulfur-carrier protein]-C-terminal Gly-Gly + 2-[(2R,5Z)-2-carboxy-4-methylthiazol-5(2H)-ylidene]ethyl phosphate + 2 H2O + H(+). The protein operates within cofactor biosynthesis; thiamine diphosphate biosynthesis. Its function is as follows. Catalyzes the rearrangement of 1-deoxy-D-xylulose 5-phosphate (DXP) to produce the thiazole phosphate moiety of thiamine. Sulfur is provided by the thiocarboxylate moiety of the carrier protein ThiS. In vitro, sulfur can be provided by H(2)S. This Bacteroides fragilis (strain ATCC 25285 / DSM 2151 / CCUG 4856 / JCM 11019 / LMG 10263 / NCTC 9343 / Onslow / VPI 2553 / EN-2) protein is Thiazole synthase.